We begin with the raw amino-acid sequence, 326 residues long: N-acetyl-gamma-glutamyl-phosphate reductase (326 aa).

C155 is a catalytic residue.

The protein belongs to the NAGSA dehydrogenase family. Type 1 subfamily.

It localises to the cytoplasm. It catalyses the reaction N-acetyl-L-glutamate 5-semialdehyde + phosphate + NADP(+) = N-acetyl-L-glutamyl 5-phosphate + NADPH + H(+). Its pathway is amino-acid biosynthesis; L-arginine biosynthesis; N(2)-acetyl-L-ornithine from L-glutamate: step 3/4. In terms of biological role, catalyzes the NADPH-dependent reduction of N-acetyl-5-glutamyl phosphate to yield N-acetyl-L-glutamate 5-semialdehyde. This Shewanella baltica (strain OS195) protein is N-acetyl-gamma-glutamyl-phosphate reductase.